A 105-amino-acid chain; its full sequence is Large ribosomal subunit protein bL21 (105 aa).

This sequence belongs to the bacterial ribosomal protein bL21 family. In terms of assembly, part of the 50S ribosomal subunit. Contacts protein L20.

This protein binds to 23S rRNA in the presence of protein L20. The chain is Large ribosomal subunit protein bL21 from Rhizobium etli (strain ATCC 51251 / DSM 11541 / JCM 21823 / NBRC 15573 / CFN 42).